The sequence spans 313 residues: Calcium homeostasis modulator protein 6 (313 aa).

At 1 to 21 the chain is on the cytoplasmic side; the sequence is MEKFKAVLDLQRKHRNALGYS. The helical transmembrane segment at 22–37 threads the bilayer; it reads LVTLLTAGGEKIFSSV. The Extracellular segment spans residues 38–46; the sequence is VFQCPCTAT. 3 cysteine pairs are disulfide-bonded: Cys41/Cys125, Cys43/Cys154, and Cys138/Cys145. Residues 47–68 traverse the membrane as a helical segment; it reads WNLPYGLVFLLVPALALFLLGY. At 69–101 the chain is on the cytoplasmic side; the sequence is ALSARTWRLLTGCCSRSARFSSGLRSAFVCAQL. Residues 102 to 126 form a helical membrane-spanning segment; sequence SMTAAFAPLTWVAVALLEGSFYQCA. The Extracellular segment spans residues 127 to 167; sequence VSGSARLAPYLCKGRDPNCNATLPQAPCNKQKVEMQEILSQ. The chain crosses the membrane as a helical span at residues 168–190; sequence LKAQSQVFGWILIAAVIILLLLV. Over 191 to 313 the chain is Cytoplasmic; sequence KSVTRCFSPV…DMSMTNTHEL (123 aa).

This sequence belongs to the CALHM family. As to quaternary structure, oligomerizes to form decameric and undecameric channels. Post-translationally, N-glycosylated. As to expression, immune cells in primary and secondary lymphoid organs.

It is found in the cell membrane. The enzyme catalyses ATP(in) = ATP(out). Its activity is regulated as follows. Inhibited by Gd(3+). Partially inhibited by divalent ions Ca(2+) and Ba(2+). Its function is as follows. Pore-forming subunit of an ATP-permeable channel. In response to pathogen-derived and proinflammatory stimuli, relocates from intracellular compartments to NK-dendritic cell and NK-macrophage immune synapses where it mediates ATP efflux and NK cell activation involved in antimicrobial and antitumor responses. May assemble to form gap junction channel-like structures with gating and ion conductance likely regulated by membrane lipids and voltage rather than by extracellular calcium levels. This chain is Calcium homeostasis modulator protein 6, found in Mus musculus (Mouse).